The following is a 511-amino-acid chain: Cytochrome P450 monooxygenase esdpI (511 aa).

Residues 14 to 34 traverse the membrane as a helical segment; it reads VRAGLAIGVAILAIIVLFPGI. Residue cysteine 453 participates in heme binding.

Belongs to the cytochrome P450 family. Requires heme as cofactor.

It localises to the membrane. The protein operates within secondary metabolite biosynthesis; terpenoid biosynthesis. Its function is as follows. Cytochrome P450 monooxygenase; part of the cluster that mediates the biosynthesis of shearones, diterpenoid pyrones (DPs) which are structurally diverse meroterpenoids consisting of a diterpene linked by a pyrone, and which may exhibit a range of bioactivities. Whitin the pathway, esdpI takes part in the molecular scaffold modification via the hydroxylation at C-20 and can transform shearone C into shearone G. The molecular scaffold is commonly biosynthesized by a series of enzymes including the non-reducing polyketide synthase (NR-PKS) esdpA that generates an alpha-pyrone; the prenyltransferase esdpC that attaches a geranylgeranyl pyrophosphate (GGPP) produced by the GGPP synthase (GGPPS) esdpD onto the pyrone unit; the FAD-dependent monooxygenase esdpE that converts an olefin on the diterpene unit into an epoxide; and the terpene cyclase esdpB that catalyzes the cyclization reactions to give the molecular backbone shearone A. In the modification steps, esdpF oxidizes the hydroxy group to a ketone at C-3 and esdpG then attaches hydroxy groups at both C-11 and C-12. After that, esdpI hydroxylates at C-20 and esdpH hydroxylates at C-6'. The ether bridge is generated by nucleophilic attack of the hydroxy group at C-20 to the carbonyl carbon at C-3. EsdpH can also functions prior to esdpI. The different combinations of these modification enzymes lead to the production of diverse shearone derivatives, shearone I being the end product of the pathway. The alpha-ketoglutarate-dependent dioxygenase esdpJ seems not to be involved in this pathway. In Penicillium shearii (Eupenicillium shearii), this protein is Cytochrome P450 monooxygenase esdpI.